The primary structure comprises 1033 residues: RNA cytidine acetyltransferase (1033 aa).

Residues 285–294 and Arg465 contribute to the ATP site; that span reads GRGKSAALGL. The 135-residue stretch at 560–694 folds into the N-acetyltransferase domain; sequence VDLKNPKLPD…IHVRDAKTMP (135 aa). Acetyl-CoA contacts are provided by residues 626–628, 633–639, and Arg727; these read IAV and VKMGYGT. The interval 988–1033 is disordered; the sequence is ENQIQKTNGKGARVVSIKGEKRKNNSLDASDKKTKEKPSSKKKFRK. Residues 1005 to 1026 are compositionally biased toward basic and acidic residues; that stretch reads KGEKRKNNSLDASDKKTKEKPS.

Belongs to the RNA cytidine acetyltransferase family. NAT10 subfamily. Interacts with tan1.

The protein resides in the nucleus. It is found in the nucleolus. The enzyme catalyses a cytidine in 18S rRNA + acetyl-CoA + ATP + H2O = an N(4)-acetylcytidine in 18S rRNA + ADP + phosphate + CoA + H(+). It catalyses the reaction a cytidine in tRNA + acetyl-CoA + ATP + H2O = an N(4)-acetylcytidine in tRNA + ADP + phosphate + CoA + H(+). RNA cytidine acetyltransferase with specificity toward both 18S rRNA and tRNAs. Catalyzes the formation of N(4)-acetylcytidine (ac4C) at positions 1297 and 1815 in 18S rRNA. Required for early nucleolar cleavages of precursor rRNA at sites A0, A1 and A2 during 18S rRNA synthesis. Catalyzes the formation of ac4C in serine and leucine tRNAs. Requires the tRNA-binding adapter protein tan1 for full tRNA acetyltransferase activity but not for 18S rRNA acetylation. This Schizosaccharomyces pombe (strain 972 / ATCC 24843) (Fission yeast) protein is RNA cytidine acetyltransferase.